Reading from the N-terminus, the 1067-residue chain is Glycine--tRNA ligase, chloroplastic/mitochondrial 2 (1067 aa).

Residues 1–50 constitute a chloroplast and mitochondrion transit peptide; it reads MAILHFSLPLIVSFLRPHASPRFFLLPRSLSQSPFLSRRRFHRTSAVSSA. E513 lines the substrate pocket. ATP-binding positions include 589-596, 619-624, 744-745, and 859-862; these read RNSGINIE, LVVPQN, RL, and GLRR. Position 624–628 (624–628) interacts with substrate; it reads NLLNE. 855–859 provides a ligand contact to substrate; that stretch reads NDPFG.

This sequence belongs to the class-II aminoacyl-tRNA synthetase family. Homodimer.

The protein resides in the plastid. The protein localises to the chloroplast. It is found in the mitochondrion. It catalyses the reaction tRNA(Gly) + glycine + ATP = glycyl-tRNA(Gly) + AMP + diphosphate. Functionally, catalyzes the attachment of glycine to tRNA(Gly). Is also able produce diadenosine tetraphosphate (Ap4A), a universal pleiotropic signaling molecule needed for cell regulation pathways, by direct condensation of 2 ATPs. The polypeptide is Glycine--tRNA ligase, chloroplastic/mitochondrial 2 (Arabidopsis thaliana (Mouse-ear cress)).